The chain runs to 508 residues: Light-independent protochlorophyllide reductase subunit B (508 aa).

A [4Fe-4S] cluster-binding site is contributed by Asp-36. The active-site Proton donor is Asp-294. 429-430 (GM) is a substrate binding site.

It belongs to the ChlB/BchB/BchZ family. Protochlorophyllide reductase is composed of three subunits; ChlL, ChlN and ChlB. Forms a heterotetramer of two ChlB and two ChlN subunits. It depends on [4Fe-4S] cluster as a cofactor.

The catalysed reaction is chlorophyllide a + oxidized 2[4Fe-4S]-[ferredoxin] + 2 ADP + 2 phosphate = protochlorophyllide a + reduced 2[4Fe-4S]-[ferredoxin] + 2 ATP + 2 H2O. The protein operates within porphyrin-containing compound metabolism; chlorophyll biosynthesis (light-independent). Functionally, component of the dark-operative protochlorophyllide reductase (DPOR) that uses Mg-ATP and reduced ferredoxin to reduce ring D of protochlorophyllide (Pchlide) to form chlorophyllide a (Chlide). This reaction is light-independent. The NB-protein (ChlN-ChlB) is the catalytic component of the complex. This chain is Light-independent protochlorophyllide reductase subunit B, found in Acaryochloris marina (strain MBIC 11017).